The chain runs to 37 residues: Large ribosomal subunit protein bL36 (37 aa).

Belongs to the bacterial ribosomal protein bL36 family.

The sequence is that of Large ribosomal subunit protein bL36 from Prochlorococcus marinus (strain MIT 9303).